A 247-amino-acid polypeptide reads, in one-letter code: MHPLLILAFVGAAVAFPSDDDDKIVGGYTCAENSVPYQVSLNAGYHFCGGSLINDQWVVSAAHCYQYHIQVRLGEYNIDVLEGGEQFIDASKIIRHPKYSSWTLDNDILLIKLSTPAVINARVSTLLLPSACASAGTECLISGWGNTLSSGVNYPDLLQCLVAPLLSHADCEASYPGQITNNMICAGFLEGGKDSCQGDSGGPVACNGQLQGIVSWGYGCAQKGKPGVYTKVCNYVDWIQETIAANS.

A signal peptide spans 1-15; it reads MHPLLILAFVGAAVA. Residues 16–23 constitute a propeptide, activation peptide; the sequence is FPSDDDDK. In terms of domain architecture, Peptidase S1 spans 24–244; that stretch reads IVGGYTCAEN…YVDWIQETIA (221 aa). 6 disulfide bridges follow: C30-C160, C48-C64, C132-C233, C139-C206, C171-C185, and C196-C220. H63 functions as the Charge relay system in the catalytic mechanism. Ca(2+) contacts are provided by E75, N77, V80, and E85. The active-site Charge relay system is D107. The active-site Charge relay system is the S200.

Belongs to the peptidase S1 family. Ca(2+) serves as cofactor. Not sulfated on tyrosine residue(s).

The protein localises to the secreted. The protein resides in the extracellular space. It catalyses the reaction Preferential cleavage: Arg-|-Xaa, Lys-|-Xaa.. The sequence is that of Anionic trypsin from Bos taurus (Bovine).